A 155-amino-acid chain; its full sequence is SsrA-binding protein (155 aa).

The span at 132-147 shows a compositional bias: basic and acidic residues; that stretch reads KRESIKRREQDRDIKR. The segment at 132–155 is disordered; the sequence is KRESIKRREQDRDIKRQMKQFNGR.

Belongs to the SmpB family.

It localises to the cytoplasm. Its function is as follows. Required for rescue of stalled ribosomes mediated by trans-translation. Binds to transfer-messenger RNA (tmRNA), required for stable association of tmRNA with ribosomes. tmRNA and SmpB together mimic tRNA shape, replacing the anticodon stem-loop with SmpB. tmRNA is encoded by the ssrA gene; the 2 termini fold to resemble tRNA(Ala) and it encodes a 'tag peptide', a short internal open reading frame. During trans-translation Ala-aminoacylated tmRNA acts like a tRNA, entering the A-site of stalled ribosomes, displacing the stalled mRNA. The ribosome then switches to translate the ORF on the tmRNA; the nascent peptide is terminated with the 'tag peptide' encoded by the tmRNA and targeted for degradation. The ribosome is freed to recommence translation, which seems to be the essential function of trans-translation. This Streptococcus mutans serotype c (strain ATCC 700610 / UA159) protein is SsrA-binding protein.